The sequence spans 153 residues: Probable trafficking protein particle complex subunit 2 (153 aa).

It belongs to the TRAPP small subunits family. Sedlin subfamily. As to quaternary structure, part of the multisubunit TRAPP (transport protein particle) complex.

Its subcellular location is the cytoplasm. The protein localises to the perinuclear region. It localises to the endoplasmic reticulum. The protein resides in the golgi apparatus. May play a role in vesicular transport from endoplasmic reticulum to Golgi. The polypeptide is Probable trafficking protein particle complex subunit 2 (Nematostella vectensis (Starlet sea anemone)).